The chain runs to 338 residues: Galaxin (338 aa).

Positions 1 to 23 (MKPSGAFLSLCVVLLSLATHCFS) are cleaved as a signal peptide. A compositionally biased stretch (basic and acidic residues) spans 30–47 (RRDAHSDTNALKSRDRRQ). The interval 30–50 (RRDAHSDTNALKSRDRRQAPA) is disordered.

In terms of tissue distribution, component of the acid-insoluble organic matrix of the aragonitic skeleton (at protein level). Initially, expressed in an aboral submarginal ring and then along calcifying septa.

Its subcellular location is the secreted. In Acropora millepora (Staghorn coral), this protein is Galaxin.